Consider the following 420-residue polypeptide: MTLSDFIGALKDNPYFGAGFGLVGVGTALAVARKGAQVGMIFFRRHYMITLEVPSKDKSYHWLLSWITKHAKHTQHLSVETSYMQHESGKVHTQFDFHPSPGNHIIWYGRKWIRVERVREKQMMDLHTGTPWESVTFTALGRDRQTFFNILQEARELALKQEEGRTVMYTAMGAEWRPFGFPRRRRPLSSVVLESGVAERIVDDVKEFIGNPKWYTDRGIPYRRGYLLYGPPGCGKSSFITALAGELGYSICLMSLSDRSLSDDRLNHLLSVAPQQSIILLEDVDAAFVSRELLPTENPLAYQGMGRLTFSGLLNALDGVASSEARIVFMTTNFIERLDPALVRPGRVDLKQYVGHCSHWQLTQMFRRFYPQESAAEADHFSEQALAAHTDLSAAQVQGHFMLYKTDPAGAIKNIAEIKD.

Over 1 to 15 (MTLSDFIGALKDNPY) the chain is Mitochondrial intermembrane. A helical transmembrane segment spans residues 16–32 (FGAGFGLVGVGTALAVA). The Mitochondrial matrix segment spans residues 33–420 (RKGAQVGMIF…AIKNIAEIKD (388 aa)). ATP is bound at residue 230–237 (GPPGCGKS).

Belongs to the AAA ATPase family. BCS1 subfamily.

It localises to the mitochondrion inner membrane. The catalysed reaction is ATP + H2O = ADP + phosphate + H(+). Chaperone necessary for the incorporation of Rieske iron-sulfur protein uqcrfs1 into the mitochondrial respiratory chain complex III. The sequence is that of Mitochondrial chaperone BCS1 (bcs1l) from Danio rerio (Zebrafish).